The chain runs to 640 residues: Chaperone protein HtpG (640 aa).

The a; substrate-binding stretch occupies residues 1-348 (MAQYKFETEV…SEDLPLNVSR (348 aa)). Residues 349 to 565 (EILQQNRILS…ETDPSLQMER (217 aa)) are b. Positions 566-640 (MMRAMGQFNT…RLNRLMTNLK (75 aa)) are c.

Belongs to the heat shock protein 90 family. Homodimer.

The protein localises to the cytoplasm. In terms of biological role, molecular chaperone. Has ATPase activity. The protein is Chaperone protein HtpG of Treponema denticola (strain ATCC 35405 / DSM 14222 / CIP 103919 / JCM 8153 / KCTC 15104).